The following is a 312-amino-acid chain: MDGGNQSEGSEFLLLGMSESPEQQRILFWMFLSMYLVTVVGNVLIILAISSDSRLHTPVYFFLANLSFTDLFFVTNTIPKMLVNLQSHNKAISYAGCLTQLYFLVSLVALDNLILAVMAYDRYVAICCPLHYTTAMSPKLCILLLSLCWVLSVLYGLIHTLLMTRVTFCGSRKIHYIFCEMYVLLRMACSNIQINHTVLIATGCFIFLIPFGFVIISYVLIIRAILRIPSVSKKYKAFSTCASHLGAVSLFYGTLCMVYLKPLHTYSVKDSVATVMYAVVTPMMNPFIYSLRNKDMHGALGRLLDKHFKRLT.

Residues 1 to 25 lie on the Extracellular side of the membrane; that stretch reads MDGGNQSEGSEFLLLGMSESPEQQR. An N-linked (GlcNAc...) asparagine glycan is attached at Asn5. The helical transmembrane segment at 26–49 threads the bilayer; it reads ILFWMFLSMYLVTVVGNVLIILAI. The Cytoplasmic segment spans residues 50-57; the sequence is SSDSRLHT. The helical transmembrane segment at 58–79 threads the bilayer; that stretch reads PVYFFLANLSFTDLFFVTNTIP. Residues 80–100 are Extracellular-facing; the sequence is KMLVNLQSHNKAISYAGCLTQ. Residues Cys97 and Cys189 are joined by a disulfide bond. A helical membrane pass occupies residues 101–120; it reads LYFLVSLVALDNLILAVMAY. Topologically, residues 121-139 are cytoplasmic; the sequence is DRYVAICCPLHYTTAMSPK. The helical transmembrane segment at 140–158 threads the bilayer; that stretch reads LCILLLSLCWVLSVLYGLI. The Extracellular segment spans residues 159–196; the sequence is HTLLMTRVTFCGSRKIHYIFCEMYVLLRMACSNIQINH. A glycan (N-linked (GlcNAc...) asparagine) is linked at Asn195. Residues 197–219 traverse the membrane as a helical segment; sequence TVLIATGCFIFLIPFGFVIISYV. At 220 to 236 the chain is on the cytoplasmic side; it reads LIIRAILRIPSVSKKYK. Residues 237-259 traverse the membrane as a helical segment; that stretch reads AFSTCASHLGAVSLFYGTLCMVY. Topologically, residues 260-271 are extracellular; it reads LKPLHTYSVKDS. Residues 272-291 form a helical membrane-spanning segment; that stretch reads VATVMYAVVTPMMNPFIYSL. Topologically, residues 292 to 312 are cytoplasmic; that stretch reads RNKDMHGALGRLLDKHFKRLT.

Belongs to the G-protein coupled receptor 1 family. In terms of tissue distribution, expressed in testis. Expressed in spermatozoa (at protein level). Expressed in olfactory epithelium.

The protein resides in the cell membrane. Functionally, odorant receptor which may be involved in sperm chemotaxis. Bourgeonal is a strong chemoattractant for sperm in vitro and is shown to be a strong agonist for OR1D2 in vitro. May also function in olfactory reception. The polypeptide is Olfactory receptor 1D2 (OR1D2) (Homo sapiens (Human)).